Reading from the N-terminus, the 297-residue chain is Quinate/shikimate dehydrogenase (297 aa).

The substrate site is built by lysine 80 and aspartate 116. NAD(+) is bound by residues 141–144, 164–167, lysine 214, 241–244, and glycine 264; these read AGGA, NRRD, and CVYN.

The protein belongs to the shikimate dehydrogenase family. Homodimer.

It carries out the reaction L-quinate + NAD(+) = 3-dehydroquinate + NADH + H(+). The enzyme catalyses L-quinate + NADP(+) = 3-dehydroquinate + NADPH + H(+). It catalyses the reaction shikimate + NADP(+) = 3-dehydroshikimate + NADPH + H(+). The catalysed reaction is shikimate + NAD(+) = 3-dehydroshikimate + NADH + H(+). The protein operates within metabolic intermediate biosynthesis; chorismate biosynthesis; chorismate from D-erythrose 4-phosphate and phosphoenolpyruvate: step 4/7. Its function is as follows. The actual biological function of YdiB remains unclear, nor is it known whether 3-dehydroshikimate or quinate represents the natural substrate. Catalyzes the reversible NAD-dependent reduction of both 3-dehydroshikimate (DHSA) and 3-dehydroquinate to yield shikimate (SA) and quinate, respectively. It can use both NAD or NADP for catalysis, however it has higher catalytic efficiency with NAD. The protein is Quinate/shikimate dehydrogenase of Shigella dysenteriae serotype 1 (strain Sd197).